The primary structure comprises 492 residues: MKLSVFRLSYWNRRGSSFRSSPSLDPSFDGKSPSSVFWFVIHGLCCLISLILGFRFSHLVLFFLFSTSVTNLYTTPFLFAGNGGVSQLLRLKPLETATNSTVKKNSRVVVGRHGIRIRPWPHPNPIEVLRAHQLLVRVQKEQKSMYGVRSPRTVIVVTPTYVRTFQALHLTGVMHSLMLVPYDLVWIVVEAGGITNETASFIAKSGLKTIHLGFDQKMPNTWEDRHKLETKMRLHALRVVREKKLDGIVMFADDSNMHSMELFDEIQTVKWFGALSVGILAHSGNADELSSILKNEQGKNKEKPSMPIQGPSCNSSEKLVGWHIFNTQPYAKKTAVYIDEKAPVMPSKMEWSGFVLNSRLLWKESLDDKPAWVKDLSLLDDGYAEIESPLSLVKDPSMVEPLGSCGRRVLLWWLRVEARADSKFPPGWIIKSPLEITVPSKRTPWPDSSSELPAAAIKEAKSNSKPRVSKSKSYKEKQEPKAFDGVKVSATS.

Residues 1 to 33 (MKLSVFRLSYWNRRGSSFRSSPSLDPSFDGKSP) lie on the Cytoplasmic side of the membrane. The helical; Signal-anchor for type II membrane protein transmembrane segment at 34 to 54 (SSVFWFVIHGLCCLISLILGF) threads the bilayer. At 55–492 (RFSHLVLFFL…FDGVKVSATS (438 aa)) the chain is on the lumenal side. N-linked (GlcNAc...) asparagine glycans are attached at residues Asn-99, Asn-196, and Asn-314. The segment at 457–492 (IKEAKSNSKPRVSKSKSYKEKQEPKAFDGVKVSATS) is disordered. Over residues 473–484 (SYKEKQEPKAFD) the composition is skewed to basic and acidic residues.

Belongs to the glycosyltransferase 43 family. Expressed in developing interfascicular fibers and xylem cells in stems and developing secondary xylem in roots.

The protein localises to the golgi apparatus membrane. In terms of biological role, involved in the synthesis of the hemicellulose glucuronoxylan, a major component of secondary cell walls. Probably involved in the elongation of glucuronoxylan xylosyl backbone. In Arabidopsis thaliana (Mouse-ear cress), this protein is Probable beta-1,4-xylosyltransferase IRX14H (IRX14H).